Here is an 88-residue protein sequence, read N- to C-terminus: UPF0237 protein SMU_72 (88 aa).

Residues 4–77 (IITVVGKDRT…ETLNVKINIQ (74 aa)) enclose the ACT domain.

The protein belongs to the UPF0237 family. As to quaternary structure, homodimer.

This is UPF0237 protein SMU_72 from Streptococcus mutans serotype c (strain ATCC 700610 / UA159).